Here is a 100-residue protein sequence, read N- to C-terminus: Integration host factor subunit alpha (100 aa).

The protein belongs to the bacterial histone-like protein family. In terms of assembly, heterodimer of an alpha and a beta chain.

This protein is one of the two subunits of integration host factor, a specific DNA-binding protein that functions in genetic recombination as well as in transcriptional and translational control. The sequence is that of Integration host factor subunit alpha from Caulobacter sp. (strain K31).